Here is a 120-residue protein sequence, read N- to C-terminus: Large ribosomal subunit protein bL20 (120 aa).

This sequence belongs to the bacterial ribosomal protein bL20 family.

Functionally, binds directly to 23S ribosomal RNA and is necessary for the in vitro assembly process of the 50S ribosomal subunit. It is not involved in the protein synthesizing functions of that subunit. This is Large ribosomal subunit protein bL20 from Novosphingobium aromaticivorans (strain ATCC 700278 / DSM 12444 / CCUG 56034 / CIP 105152 / NBRC 16084 / F199).